The primary structure comprises 490 residues: Thiamine biosynthesis bifunctional protein ThiED (490 aa).

The segment at 1–213 (MASNGHTLRL…PDPALAATEI (213 aa)) is thiamine-phosphate synthase. 4-amino-2-methyl-5-(diphosphooxymethyl)pyrimidine is bound by residues 50 to 54 (QYRNK) and asparagine 82. Aspartate 83 and aspartate 102 together coordinate Mg(2+). Residue serine 121 participates in 4-amino-2-methyl-5-(diphosphooxymethyl)pyrimidine binding. 147–149 (SRS) serves as a coordination point for 2-[(2R,5Z)-2-carboxy-4-methylthiazol-5(2H)-ylidene]ethyl phosphate. Position 150 (lysine 150) interacts with 4-amino-2-methyl-5-(diphosphooxymethyl)pyrimidine. 2-[(2R,5Z)-2-carboxy-4-methylthiazol-5(2H)-ylidene]ethyl phosphate-binding positions include glycine 177 and 197–198 (IS). Residues 229–490 (LTVAGSDSGG…ILAAEDVRDR (262 aa)) form a hydroxymethylpyrimidine/phosphomethylpyrimidine kinase region. Glutamine 266 serves as a coordination point for 4-amino-5-hydroxymethyl-2-methylpyrimidine.

The protein in the N-terminal section; belongs to the thiamine-phosphate synthase family. It in the C-terminal section; belongs to the ThiD family. The cofactor is Mg(2+).

The enzyme catalyses 2-[(2R,5Z)-2-carboxy-4-methylthiazol-5(2H)-ylidene]ethyl phosphate + 4-amino-2-methyl-5-(diphosphooxymethyl)pyrimidine + 2 H(+) = thiamine phosphate + CO2 + diphosphate. It carries out the reaction 2-(2-carboxy-4-methylthiazol-5-yl)ethyl phosphate + 4-amino-2-methyl-5-(diphosphooxymethyl)pyrimidine + 2 H(+) = thiamine phosphate + CO2 + diphosphate. The catalysed reaction is 4-methyl-5-(2-phosphooxyethyl)-thiazole + 4-amino-2-methyl-5-(diphosphooxymethyl)pyrimidine + H(+) = thiamine phosphate + diphosphate. It catalyses the reaction 4-amino-5-hydroxymethyl-2-methylpyrimidine + ATP = 4-amino-2-methyl-5-(phosphooxymethyl)pyrimidine + ADP + H(+). The enzyme catalyses 4-amino-2-methyl-5-(phosphooxymethyl)pyrimidine + ATP = 4-amino-2-methyl-5-(diphosphooxymethyl)pyrimidine + ADP. It participates in cofactor biosynthesis; thiamine diphosphate biosynthesis; 4-amino-2-methyl-5-diphosphomethylpyrimidine from 5-amino-1-(5-phospho-D-ribosyl)imidazole: step 3/3. The protein operates within cofactor biosynthesis; thiamine diphosphate biosynthesis; thiamine phosphate from 4-amino-2-methyl-5-diphosphomethylpyrimidine and 4-methyl-5-(2-phosphoethyl)-thiazole: step 1/1. Its function is as follows. Condenses 4-methyl-5-(beta-hydroxyethyl)thiazole monophosphate (THZ-P) and 2-methyl-4-amino-5-hydroxymethyl pyrimidine pyrophosphate (HMP-PP) to form thiamine monophosphate (TMP). Catalyzes the phosphorylation of hydroxymethylpyrimidine phosphate (HMP-P) to HMP-PP, and of HMP to HMP-P. This Geobacter sulfurreducens (strain ATCC 51573 / DSM 12127 / PCA) protein is Thiamine biosynthesis bifunctional protein ThiED (thiDE).